Reading from the N-terminus, the 341-residue chain is L-threonine 3-dehydrogenase (341 aa).

A Zn(2+)-binding site is contributed by Cys-38. Residues Thr-40 and His-43 each act as charge relay system in the active site. 6 residues coordinate Zn(2+): His-63, Glu-64, Cys-93, Cys-96, Cys-99, and Cys-107. Residues Ile-175, Asp-195, Arg-200, 262 to 264, and 286 to 287 each bind NAD(+); these read LGI and IY.

This sequence belongs to the zinc-containing alcohol dehydrogenase family. In terms of assembly, homotetramer. It depends on Zn(2+) as a cofactor.

The protein resides in the cytoplasm. The enzyme catalyses L-threonine + NAD(+) = (2S)-2-amino-3-oxobutanoate + NADH + H(+). It participates in amino-acid degradation; L-threonine degradation via oxydo-reductase pathway; glycine from L-threonine: step 1/2. In terms of biological role, catalyzes the NAD(+)-dependent oxidation of L-threonine to 2-amino-3-ketobutyrate. The chain is L-threonine 3-dehydrogenase from Shewanella sediminis (strain HAW-EB3).